Reading from the N-terminus, the 202-residue chain is MLVETGFCRVGQAGLELLSSSDKAAGLDLPKCWDYRHEPPRLAPLLIFNPHPSTVLSCNCEYNSFFEFCDSLQQIVIPERVLGTPRHIFPLPLLFSHFLWSKLKEAPACLLQGSSEHTEIICDLISSSKQFIKKFLSNKPSALHGGDADENDFLQLITRLQKLLFKSLSMYVCVHIHQHTHACPQLSCLHQNQDEELFYCQN.

This is an uncharacterized protein from Homo sapiens (Human).